The following is a 182-amino-acid chain: MKQLLDFLPLVIFFAVYKMYDIYIASGALIAATALQLIVTYALYKKIEKMHLITFVMVTFFGTLTLIFHDDAFIKWKVTVVYALFAIALAVSQLLNKPILKSMLGKELVVADKIWAHVTWYWVSFFVACGLVNIYVAFSLSQETWVNFKVFGLTALTLINTVITVVYLFKNMPEEHKKELNK.

The next 5 helical transmembrane spans lie at 22-42 (IYIASGALIAATALQLIVTYA), 50-70 (MHLITFVMVTFFGTLTLIFHD), 72-92 (AFIKWKVTVVYALFAIALAVS), 118-138 (VTWYWVSFFVACGLVNIYVAF), and 148-168 (FKVFGLTALTLINTVITVVYL).

Belongs to the YciB family.

Its subcellular location is the cell inner membrane. In terms of biological role, plays a role in cell envelope biogenesis, maintenance of cell envelope integrity and membrane homeostasis. In Shewanella woodyi (strain ATCC 51908 / MS32), this protein is Inner membrane-spanning protein YciB.